Consider the following 245-residue polypeptide: MWQFPALLFLFLPGCCTAQDPVTGPEEVSGQEQGSLTVQCRYDSGWKDYKKYWCRGAYWKSCEILVETDASEQLVKENRVSIRDDQTDFIFTVTMEDLRMSDADIYWCGITKAGTDPMFKVNVNIDPEISTTIMTTTATVLPSTVLTSTVLTSTVLTPTTPTTESIGTENIGQVTQNSLFIWSLLSSISFLLMVFVVVPLLLSMLSAVLWVNRPQRHYGGGEIGLVETHRSDALDGEKHFPGDEK.

A signal peptide spans 1–18 (MWQFPALLFLFLPGCCTA). The 106-residue stretch at 19-124 (QDPVTGPEEV…TDPMFKVNVN (106 aa)) folds into the Ig-like V-type domain. At 19–189 (QDPVTGPEEV…FIWSLLSSIS (171 aa)) the chain is on the extracellular side. Cysteine 40 and cysteine 108 are joined by a disulfide. Important for maintaining surface expression and for interaction with FCER1G stretches follow at residues 177 to 182 (NSLFIW) and 189 to 198 (SFLLMVFVVV). A helical membrane pass occupies residues 190 to 210 (FLLMVFVVVPLLLSMLSAVLW). Topologically, residues 211–245 (VNRPQRHYGGGEIGLVETHRSDALDGEKHFPGDEK) are cytoplasmic.

It belongs to the CD300 family. As to quaternary structure, interacts with FCER1G; the interaction may be indirect. Interacts with TLR9. Highly expressed in bone marrow-derived mast cells and macrophages, peripheral blood monocytes and CD11c+ cells, with weaker expression detected in CD11b cells in bone marrow and peripheral blood. Not detected in B220+ cells in bone marrow or spleen, in Thy-1.2+ or CD3+ cells in peripheral blood, spleen or thymus, or in NK1.1+ cells in spleen (at protein level). Widely expressed in various tissues including heart, liver, spleen, lung, kidney, brain, bone marrow, thymus, axillary lymph node and mesenteric lymph node. Highly expressed in macrophage cell lines J774.1 and RAW 264.7 and in mast cell line MC/9. Weak expression detected in B-lineage cell lines WEHI-231 and A20 and in dendritic cell line DC2.4. Not detected in other myeloid cell lines or T-lineage cell lines.

The protein localises to the cell membrane. Its subcellular location is the early endosome. It localises to the lysosome. In terms of biological role, acts as an activating receptor inducing cytokine production in mast cells. Can act as a positive regulator of TLR9 signaling in macrophages, leading to enhanced production of pro-inflammatory cytokines. The polypeptide is CMRF35-like molecule 3 (Mus musculus (Mouse)).